Consider the following 346-residue polypeptide: Uricase (346 aa).

A disordered region spans residues 1–23 (MFATPLRQPTNASGARPAVSMDG). Active-site charge relay system residues include Lys-39 and Thr-84. Thr-84, Asp-85, Phe-208, Arg-225, Val-273, Gln-274, and Asn-300 together coordinate urate. The Charge relay system role is filled by His-302. The Microbody targeting signal signature appears at 344 to 346 (SHL).

The protein belongs to the uricase family. As to expression, malpighian tubules.

The protein localises to the peroxisome. The enzyme catalyses urate + O2 + H2O = 5-hydroxyisourate + H2O2. Its pathway is purine metabolism; urate degradation; (S)-allantoin from urate: step 1/3. With respect to regulation, repressed by 20-hydroxyecdysone. In terms of biological role, catalyzes the oxidation of uric acid to 5-hydroxyisourate, which is further processed to form (S)-allantoin. In Drosophila pseudoobscura pseudoobscura (Fruit fly), this protein is Uricase (Uro).